The chain runs to 306 residues: Glutaminase (306 aa).

S61, N111, E157, N164, Y188, Y240, and V258 together coordinate substrate.

The protein belongs to the glutaminase family. In terms of assembly, homotetramer.

The enzyme catalyses L-glutamine + H2O = L-glutamate + NH4(+). The polypeptide is Glutaminase (Psychrobacter cryohalolentis (strain ATCC BAA-1226 / DSM 17306 / VKM B-2378 / K5)).